Reading from the N-terminus, the 625-residue chain is UvrABC system protein C (625 aa).

The GIY-YIG domain occupies 26–105 (LEPGVYFLRD…IKQHQPHFNT (80 aa)). Positions 215–250 (GELLEKLATKMLAASENLDFEQAATIRDQIRGLQAL) constitute a UVR domain.

The protein belongs to the UvrC family. Interacts with UvrB in an incision complex.

The protein resides in the cytoplasm. In terms of biological role, the UvrABC repair system catalyzes the recognition and processing of DNA lesions. UvrC both incises the 5' and 3' sides of the lesion. The N-terminal half is responsible for the 3' incision and the C-terminal half is responsible for the 5' incision. In Microcystis aeruginosa (strain NIES-843 / IAM M-2473), this protein is UvrABC system protein C.